A 750-amino-acid chain; its full sequence is Photosystem I P700 chlorophyll a apoprotein A1 (750 aa).

8 helical membrane-spanning segments follow: residues 70–93 (VFSAHFGQLSIIFLWLSGMYFHGA), 156–179 (LYCTAIGALIFAALMLFAGWFHYH), 195–219 (LNHHLAGLLGLGSLSWAGHQIHVSL), 291–309 (IAHHHLAIAILFLIAGHMY), 346–369 (WHAQLSLNLAMLGSTTIVVAHHMY), 385–411 (LSLFTHHMWIGGFLIVGAAAHAAIFMV), 433–455 (AIISHLNWVCIFLGFHSFGLYIH), and 531–549 (FLVHHIHAFTIHVTVLILL). The [4Fe-4S] cluster site is built by Cys-573 and Cys-582. Transmembrane regions (helical) follow at residues 589 to 610 (HVFLGLFWMYNAISVVIFHFSW) and 664 to 686 (LSAYGLFFLGAHFVWAFSLMFLF). Position 675 (His-675) interacts with chlorophyll a'. Chlorophyll a contacts are provided by Met-683 and Tyr-691. Trp-692 provides a ligand contact to phylloquinone. Residues 724-744 (AVGVTHYLLGGIATTWAFFLA) traverse the membrane as a helical segment.

It belongs to the PsaA/PsaB family. As to quaternary structure, the PsaA/B heterodimer binds the P700 chlorophyll special pair and subsequent electron acceptors. PSI consists of a core antenna complex that captures photons, and an electron transfer chain that converts photonic excitation into a charge separation. The eukaryotic PSI reaction center is composed of at least 11 subunits. P700 is a chlorophyll a/chlorophyll a' dimer, A0 is one or more chlorophyll a, A1 is one or both phylloquinones and FX is a shared 4Fe-4S iron-sulfur center. is required as a cofactor.

Its subcellular location is the plastid. The protein localises to the chloroplast thylakoid membrane. It carries out the reaction reduced [plastocyanin] + hnu + oxidized [2Fe-2S]-[ferredoxin] = oxidized [plastocyanin] + reduced [2Fe-2S]-[ferredoxin]. Functionally, psaA and PsaB bind P700, the primary electron donor of photosystem I (PSI), as well as the electron acceptors A0, A1 and FX. PSI is a plastocyanin-ferredoxin oxidoreductase, converting photonic excitation into a charge separation, which transfers an electron from the donor P700 chlorophyll pair to the spectroscopically characterized acceptors A0, A1, FX, FA and FB in turn. Oxidized P700 is reduced on the lumenal side of the thylakoid membrane by plastocyanin. The protein is Photosystem I P700 chlorophyll a apoprotein A1 of Agrostis stolonifera (Creeping bentgrass).